A 236-amino-acid chain; its full sequence is Protein-L-isoaspartate O-methyltransferase 1 (236 aa).

Residue S86 is part of the active site.

Belongs to the methyltransferase superfamily. L-isoaspartyl/D-aspartyl protein methyltransferase family.

The protein resides in the cytoplasm. It carries out the reaction [protein]-L-isoaspartate + S-adenosyl-L-methionine = [protein]-L-isoaspartate alpha-methyl ester + S-adenosyl-L-homocysteine. In terms of biological role, catalyzes the methyl esterification of L-isoaspartyl residues in peptides and proteins that result from spontaneous decomposition of normal L-aspartyl and L-asparaginyl residues. It plays a role in the repair and/or degradation of damaged proteins. In Nitrosospira multiformis (strain ATCC 25196 / NCIMB 11849 / C 71), this protein is Protein-L-isoaspartate O-methyltransferase 1.